Consider the following 363-residue polypeptide: Protein-glutamate methylesterase/protein-glutamine glutaminase 2 (363 aa).

The Response regulatory domain occupies arginine 7–glutamate 124. A 4-aspartylphosphate modification is found at aspartate 58. A CheB-type methylesterase domain is found at proline 160–glutamine 357. Active-site residues include serine 176, histidine 203, and aspartate 299.

Belongs to the CheB family. Phosphorylated by CheA. Phosphorylation of the N-terminal regulatory domain activates the methylesterase activity.

It localises to the cytoplasm. The enzyme catalyses [protein]-L-glutamate 5-O-methyl ester + H2O = L-glutamyl-[protein] + methanol + H(+). The catalysed reaction is L-glutaminyl-[protein] + H2O = L-glutamyl-[protein] + NH4(+). Involved in chemotaxis. Part of a chemotaxis signal transduction system that modulates chemotaxis in response to various stimuli. Catalyzes the demethylation of specific methylglutamate residues introduced into the chemoreceptors (methyl-accepting chemotaxis proteins or MCP) by CheR. Also mediates the irreversible deamidation of specific glutamine residues to glutamic acid. The polypeptide is Protein-glutamate methylesterase/protein-glutamine glutaminase 2 (Koribacter versatilis (strain Ellin345)).